A 211-amino-acid chain; its full sequence is Xanthine phosphoribosyltransferase (211 aa).

The xanthine site is built by leucine 31 and asparagine 38. Residue 138 to 142 (ANGRT) coordinates 5-phospho-alpha-D-ribose 1-diphosphate. Lysine 166 serves as a coordination point for xanthine.

Belongs to the purine/pyrimidine phosphoribosyltransferase family. Xpt subfamily. In terms of assembly, homodimer.

The protein resides in the cytoplasm. The enzyme catalyses XMP + diphosphate = xanthine + 5-phospho-alpha-D-ribose 1-diphosphate. The protein operates within purine metabolism; XMP biosynthesis via salvage pathway; XMP from xanthine: step 1/1. Its function is as follows. Converts the preformed base xanthine, a product of nucleic acid breakdown, to xanthosine 5'-monophosphate (XMP), so it can be reused for RNA or DNA synthesis. The polypeptide is Xanthine phosphoribosyltransferase (Chloroflexus aurantiacus (strain ATCC 29364 / DSM 637 / Y-400-fl)).